A 290-amino-acid chain; its full sequence is Syntaxin-2 (290 aa).

At 1-266 the chain is on the cytoplasmic side; the sequence is MRDRLPDLTA…KYQSKARRKK (266 aa). Serine 14 carries the post-translational modification Phosphoserine. Residues 69-106 are a coiled coil; it reads EGKIKEELEDLNKEIKKTANRIRGKLKAIEQSCDQDEN. Residues 193–255 enclose the t-SNARE coiled-coil homology domain; sequence LNEIESRHKD…EHAKEETKKA (63 aa). The helical; Anchor for type IV membrane protein transmembrane segment at 267 to 290 threads the bilayer; the sequence is WIIAAVVVAVIAVLALIIGLTVGK.

This sequence belongs to the syntaxin family. In terms of assembly, interacts with SYT6 and SYT8; the interaction is Ca(2+)-dependent. In terms of tissue distribution, heart, spleen, liver, and testis.

The protein resides in the membrane. Essential for epithelial morphogenesis. May mediate Ca(2+)-regulation of exocytosis acrosomal reaction in sperm. The polypeptide is Syntaxin-2 (Stx2) (Rattus norvegicus (Rat)).